The primary structure comprises 126 residues: Glycine cleavage system H protein (126 aa).

The 83-residue stretch at Thr-21 to Lys-103 folds into the Lipoyl-binding domain. Lys-62 carries the post-translational modification N6-lipoyllysine.

This sequence belongs to the GcvH family. The glycine cleavage system is composed of four proteins: P, T, L and H. (R)-lipoate is required as a cofactor.

Its function is as follows. The glycine cleavage system catalyzes the degradation of glycine. The H protein shuttles the methylamine group of glycine from the P protein to the T protein. This chain is Glycine cleavage system H protein, found in Vibrio atlanticus (strain LGP32) (Vibrio splendidus (strain Mel32)).